A 750-amino-acid chain; its full sequence is Glutamate carboxypeptidase 2 (750 aa).

The Cytoplasmic portion of the chain corresponds to 1-19; sequence MWNLLHETDSAVATARRPR. Residue S10 is modified to Phosphoserine. Residues 20–43 traverse the membrane as a helical; Signal-anchor for type II membrane protein segment; the sequence is WLCAGALVLAGGFFLLGFLFGWFI. Over 44-750 the chain is Extracellular; that stretch reads KSSNEATNIT…AAAETLSEVA (707 aa). N-linked (GlcNAc...) asparagine glycosylation is found at N51, N76, N121, N140, N153, and N195. 2 residues coordinate substrate: R210 and N257. The Ca(2+) site is built by T269 and Y272. Residues 274-587 are NAALADase; the sequence is ANEYAYRRGI…QVRGGMVFEL (314 aa). N-linked (GlcNAc...) asparagine glycosylation occurs at N336. Zn(2+) is bound by residues H377 and D387. E424 is a substrate binding site. Catalysis depends on E424, which acts as the Nucleophile; for NAALADase activity. Residue E425 participates in Zn(2+) binding. Ca(2+) is bound by residues E433 and E436. D453 lines the Zn(2+) pocket. Residues N459 and N476 are each glycosylated (N-linked (GlcNAc...) asparagine). Residues 517–518, N519, 534–536, Y552, and 552–553 contribute to the substrate site; these read SG, RAR, and YH. Residue H553 coordinates Zn(2+). S628 serves as the catalytic Charge relay system. N638 carries N-linked (GlcNAc...) asparagine glycosylation. Catalysis depends on charge relay system residues D666 and H689. 699 to 700 serves as a coordination point for substrate; it reads KY.

This sequence belongs to the peptidase M28 family. M28B subfamily. As to quaternary structure, homodimer. Zn(2+) serves as cofactor. Post-translationally, the first two amino acids at the N-terminus of isoform PSMA' appear to be cleaved by limited proteolysis. The N-terminus is blocked. As to expression, highly expressed in prostate epithelium. Detected in urinary bladder, kidney, testis, ovary, fallopian tube, breast, adrenal gland, liver, esophagus, stomach, small intestine, colon and brain (at protein level). Detected in the small intestine, brain, kidney, liver, spleen, colon, trachea, spinal cord and the capillary endothelium of a variety of tumors. Expressed specifically in jejunum brush border membranes. In the brain, highly expressed in the ventral striatum and brain stem. Also expressed in fetal liver and kidney. Isoform PSMA' is the most abundant form in normal prostate. Isoform PSMA-1 is the most abundant form in primary prostate tumors. Isoform PSMA-9 is specifically expressed in prostate cancer.

It is found in the cell membrane. The protein localises to the cytoplasm. It carries out the reaction Release of an unsubstituted, C-terminal glutamyl residue, typically from Ac-Asp-Glu or folylpoly-gamma-glutamates.. The NAALADase activity is inhibited by beta-NAAG, quisqualic acid, 2-(phosphonomethyl) pentanedioic acid (PMPA) and EDTA. Activated by cobalt. Has both folate hydrolase and N-acetylated-alpha-linked-acidic dipeptidase (NAALADase) activity. Has a preference for tri-alpha-glutamate peptides. In the intestine, required for the uptake of folate. In the brain, modulates excitatory neurotransmission through the hydrolysis of the neuropeptide, N-aceylaspartylglutamate (NAAG), thereby releasing glutamate. Involved in prostate tumor progression. Its function is as follows. Also exhibits a dipeptidyl-peptidase IV type activity. In vitro, cleaves Gly-Pro-AMC. In Homo sapiens (Human), this protein is Glutamate carboxypeptidase 2.